The chain runs to 212 residues: Pyridoxine/pyridoxamine 5'-phosphate oxidase (212 aa).

FMN contacts are provided by residues 59–64 (RMVLMK), 74–75 (YS), Lys81, and Gln103. Residue Lys64 coordinates substrate. Positions 121 and 125 each coordinate substrate. FMN is bound by residues 138-139 (QS) and Trp183. Residue 189–191 (RLH) participates in substrate binding. Arg193 is a binding site for FMN.

Belongs to the pyridoxamine 5'-phosphate oxidase family. In terms of assembly, homodimer. It depends on FMN as a cofactor.

It carries out the reaction pyridoxamine 5'-phosphate + O2 + H2O = pyridoxal 5'-phosphate + H2O2 + NH4(+). It catalyses the reaction pyridoxine 5'-phosphate + O2 = pyridoxal 5'-phosphate + H2O2. It functions in the pathway cofactor metabolism; pyridoxal 5'-phosphate salvage; pyridoxal 5'-phosphate from pyridoxamine 5'-phosphate: step 1/1. The protein operates within cofactor metabolism; pyridoxal 5'-phosphate salvage; pyridoxal 5'-phosphate from pyridoxine 5'-phosphate: step 1/1. In terms of biological role, catalyzes the oxidation of either pyridoxine 5'-phosphate (PNP) or pyridoxamine 5'-phosphate (PMP) into pyridoxal 5'-phosphate (PLP). The polypeptide is Pyridoxine/pyridoxamine 5'-phosphate oxidase (Rhodopseudomonas palustris (strain TIE-1)).